The following is a 297-amino-acid chain: GATA transcription factor 24 (297 aa).

Residues 73 to 108 form the Tify domain; that stretch reads GIENGDQLTLSFQGQVYVFDRVSPEKVQAVLLLLGG. The CCT domain occupies 143–185; sequence RLASLLRFREKRKGRNFDKTIRYTVRKEVALRMQRKKGQFTSA. Residues 178–203 form a disordered region; that stretch reads KKGQFTSAKSSNDDSGSTGSDWGSNQ. The span at 190–201 shows a compositional bias: low complexity; the sequence is DDSGSTGSDWGS. The segment at 213–269 adopts a GATA-type zinc-finger fold; that stretch reads QKPEVLCRHCGTSEKSTPMMRRGPDGPRTLCNACGLMWANKGTLRDLSKVPPPQTPQ.

The protein belongs to the type IV zinc-finger family. Class C subfamily. As to expression, predominantly expressed in shoot apices, inflorescences and roots.

It localises to the nucleus. Functionally, transcriptional activator that specifically binds 5'-GATA-3' or 5'-GAT-3' motifs within gene promoters. The chain is GATA transcription factor 24 (GATA24) from Arabidopsis thaliana (Mouse-ear cress).